The sequence spans 468 residues: MVRGLMKFPGISTKLLNISVNSLCKFRNLERAETLLIDGIRLGVLPDVITYNTLIKGYTRFIGIDEAYAVTRRMREAGIEPDVTTYNSLISGAAKNLMLNRVLQLFDEMLHSGLSPDMWSYNTLMSCYFKLGRHGEAFKILHEDIHLAGLVPGIDTYNILLDALCKSGHTDNAIELFKHLKSRVKPELMTYNILINGLCKSRRVGSVDWMMRELKKSGYTPNAVTYTTMLKMYFKTKRIEKGLQLFLKMKKEGYTFDGFANCAVVSALIKTGRAEEAYECMHELVRSGTRSQDIVSYNTLLNLYFKDGNLDAVDDLLEEIEMKGLKPDDYTHTIIVNGLLNIGNTGGAEKHLACIGEMGMQPSVVTCNCLIDGLCKAGHVDRAMRLFASMEVRDEFTYTSVVHNLCKDGRLVCASKLLLSCYNKGMKIPSSARRAVLSGIRETVSYQAARKTHIKIKAAIECNTLMYP.

PPR repeat units lie at residues 12 to 46 (STKL…GVLP), 47 to 81 (DVIT…GIEP), 82 to 116 (DVTT…GLSP), 117 to 152 (DMWS…GLVP), 153 to 183 (GIDT…LKSR), 187 to 221 (ELMT…GYTP), 222 to 256 (NAVT…GYTF), 257 to 291 (DGFA…GTRS), 293 to 327 (DIVS…GLKP), 328 to 362 (DDYT…GMQP), 363 to 393 (SVVT…MEVR), and 394 to 428 (DEFT…GMKI).

This sequence belongs to the PPR family. P subfamily.

This Arabidopsis thaliana (Mouse-ear cress) protein is Pentatricopeptide repeat-containing protein At5g46680.